The following is a 147-amino-acid chain: Large ribosomal subunit protein bL9 (147 aa).

The protein belongs to the bacterial ribosomal protein bL9 family.

Its function is as follows. Binds to the 23S rRNA. This chain is Large ribosomal subunit protein bL9, found in Geobacter sp. (strain M21).